Reading from the N-terminus, the 319-residue chain is Sliding-clamp-loader large subunit (319 aa).

ATP contacts are provided by residues 12-15, I24, 53-58, and R205; these read EQKY and GTGKTT.

This sequence belongs to the Tevenvirinae sliding-clamp-loader large subunit family. The sliding-clamp-loader consists of 4 large subunits and 1 small subunit. Interacts with the sliding clamp; this interaction allows the sliding-clamp-loader to open the sliding clamp. Part of the replicase complex that includes the DNA polymerase, the polymerase clamp, the clamp loader complex, the single-stranded DNA binding protein, the primase, the helicase and the helicase assembly factor.

Forms the sliding-clamp-loader together with the small subunit. Functions as an ATPase enzyme. The clamp loader holds the clamp in an open conformation and places it onto the DNA. 4 ATP molecules must bind to the sliding-clamp-loader before the latter can open the sliding clamp. ATP hydrolysis triggers the detachment of the sliding clamp from the sliding-clamp-loader, freeing the sliding clamp to track along DNA. In Enterobacteria phage T4 (Bacteriophage T4), this protein is Sliding-clamp-loader large subunit (44).